A 727-amino-acid polypeptide reads, in one-letter code: NADH-ubiquinone oxidoreductase 75 kDa subunit, mitochondrial (727 aa).

Residues 1–23 (MLRIPVRKALVGLSKSSKGCVRT) constitute a mitochondrion transit peptide. One can recognise a 2Fe-2S ferredoxin-type domain in the interval 30 to 108 (NLIEVFVDGQ…GWNILTNSEK (79 aa)). [2Fe-2S] cluster contacts are provided by Cys64, Cys75, and Cys78. Lys84 carries the N6-acetyllysine modification. Cys92 provides a ligand contact to [2Fe-2S] cluster. The 4Fe-4S His(Cys)3-ligated-type domain maps to 108-147 (KTKKAREGVMEFLLANHPLDCPICDQGGECDLQDQSMMFG). [4Fe-4S] cluster-binding residues include His124, Cys128, Cys131, Cys137, Cys176, Cys179, Cys182, and Cys226. The 57-residue stretch at 245-301 (TRKTESIDVMDAVGSNIVVSTRTGEVMRILPRMHEDINEEWISDKTRFAYDGLKRQR) folds into the 4Fe-4S Mo/W bis-MGD-type domain. N6-acetyllysine occurs at positions 499 and 709.

The protein belongs to the complex I 75 kDa subunit family. Core subunit of respiratory chain NADH dehydrogenase (Complex I) which is composed of 45 different subunits. This is the largest subunit of complex I and it is a component of the iron-sulfur (IP) fragment of the enzyme. Complex I associates with ubiquinol-cytochrome reductase complex (Complex III) to form supercomplexes. Interacts with MDM2 and AKAP1. The cofactor is [2Fe-2S] cluster. It depends on [4Fe-4S] cluster as a cofactor.

It localises to the mitochondrion inner membrane. The catalysed reaction is a ubiquinone + NADH + 5 H(+)(in) = a ubiquinol + NAD(+) + 4 H(+)(out). Functionally, core subunit of the mitochondrial membrane respiratory chain NADH dehydrogenase (Complex I) which catalyzes electron transfer from NADH through the respiratory chain, using ubiquinone as an electron acceptor. Essential for catalysing the entry and efficient transfer of electrons within complex I. Plays a key role in the assembly and stability of complex I and participates in the association of complex I with ubiquinol-cytochrome reductase complex (Complex III) to form supercomplexes. The polypeptide is NADH-ubiquinone oxidoreductase 75 kDa subunit, mitochondrial (NDUFS1) (Bos taurus (Bovine)).